The primary structure comprises 300 residues: Free fatty acid receptor 1 (300 aa).

The Extracellular segment spans residues 1–8 (MALSPQLF). Residues 9–31 (FALYVSAFALGFPLNLLAIRGAV) form a helical membrane-spanning segment. Residues 32–41 (ARARLRLTPN) are Cytoplasmic-facing. Residues 42-64 (LVYTLHLACSDLLLAITLPVKAV) traverse the membrane as a helical segment. Over 65-79 (EALASGAWPLPLPLC) the chain is Extracellular. The cysteines at positions 79 and 170 are disulfide-linked. A helical membrane pass occupies residues 80–101 (PVFVLVHFAPLYAGGGFLAALS). Over 102–121 (AGRYLGAAFPFGYQAVRRPR) the chain is Cytoplasmic. The chain crosses the membrane as a helical span at residues 122-142 (YSWGVCVAIWALVLCHMGLVL). The Extracellular segment spans residues 143-178 (GLEAPGGWLNTTSSSLGINTPVNGSPVCLEAWDPNS). N-linked (GlcNAc...) asparagine glycosylation is present at Asn152. The chain crosses the membrane as a helical span at residues 179-200 (ARPARLSFSILLFFVPLVITAF). At 201-223 (CYVGCLRALAHSGLSHKRKLRAA) the chain is on the cytoplasmic side. Residues 224-248 (WAAGGAFLTLLLCLGPYNASNVASF) form a helical membrane-spanning segment. Residues 249-256 (VNPDLGGS) are Extracellular-facing. The helical transmembrane segment at 257-279 (WRKLGLITGSWSVVLNPLVTGYL) threads the bilayer. Residues 280-300 (GASPGRGTVCTTRTQGGTIQK) are Cytoplasmic-facing.

This sequence belongs to the G-protein coupled receptor 1 family.

Its subcellular location is the cell membrane. Its function is as follows. G-protein coupled receptor for medium and long chain saturated and unsaturated fatty acids that plays an important role in glucose homeostasis. Fatty acid binding increases glucose-stimulated insulin secretion, and may also enhance the secretion of glucagon-like peptide 1 (GLP-1). May also play a role in bone homeostasis; receptor signaling activates pathways that inhibit osteoclast differentiation. Ligand binding leads to a conformation change that triggers signaling via G-proteins that activate phospholipase C, leading to an increase of the intracellular calcium concentration. Seems to act through a G(q) and G(i)-mediated pathway. Mediates the anti-inflammatory effects of omega-3 polyunsaturated fatty acids (PUFAs) via inhibition of NLRP3 inflammasome activation. The polypeptide is Free fatty acid receptor 1 (FFAR1) (Mesocricetus auratus (Golden hamster)).